The chain runs to 560 residues: NAD-dependent malic enzyme (560 aa).

Tyrosine 100 acts as the Proton donor in catalysis. Arginine 153 provides a ligand contact to NAD(+). The active-site Proton acceptor is the lysine 171. A divalent metal cation is bound by residues glutamate 242, aspartate 243, and aspartate 266. Residues aspartate 266 and asparagine 413 each coordinate NAD(+).

The protein belongs to the malic enzymes family. As to quaternary structure, homotetramer. It depends on Mg(2+) as a cofactor. Mn(2+) is required as a cofactor.

It carries out the reaction (S)-malate + NAD(+) = pyruvate + CO2 + NADH. The enzyme catalyses oxaloacetate + H(+) = pyruvate + CO2. This Psychrobacter arcticus (strain DSM 17307 / VKM B-2377 / 273-4) protein is NAD-dependent malic enzyme.